Reading from the N-terminus, the 59-residue chain is MPKIIEAVYENGVFKPLQKVDLREGEKVKIIAGNLVERLRKYRVKVDSDIVAEFISERR.

It belongs to the UPF0165 family.

Its function is as follows. Possibly the antitoxin component of a type II toxin-antitoxin (TA) system. The polypeptide is Putative antitoxin AF_1090 (Archaeoglobus fulgidus (strain ATCC 49558 / DSM 4304 / JCM 9628 / NBRC 100126 / VC-16)).